We begin with the raw amino-acid sequence, 487 residues long: N-succinylglutamate 5-semialdehyde dehydrogenase (487 aa).

NAD(+) is bound at residue Gly221–Gly226. Catalysis depends on residues Glu244 and Cys278.

It belongs to the aldehyde dehydrogenase family. AstD subfamily.

The enzyme catalyses N-succinyl-L-glutamate 5-semialdehyde + NAD(+) + H2O = N-succinyl-L-glutamate + NADH + 2 H(+). It functions in the pathway amino-acid degradation; L-arginine degradation via AST pathway; L-glutamate and succinate from L-arginine: step 4/5. Its function is as follows. Catalyzes the NAD-dependent reduction of succinylglutamate semialdehyde into succinylglutamate. The polypeptide is N-succinylglutamate 5-semialdehyde dehydrogenase (Burkholderia lata (strain ATCC 17760 / DSM 23089 / LMG 22485 / NCIMB 9086 / R18194 / 383)).